Here is a 487-residue protein sequence, read N- to C-terminus: Malonate-semialdehyde dehydrogenase 3 (487 aa).

Positions 154, 178, 181, 182, and 231 each coordinate NAD(+). Residue Cys286 is the Nucleophile of the active site. Residue Glu386 coordinates NAD(+).

The protein belongs to the aldehyde dehydrogenase family. IolA subfamily. In terms of assembly, homotetramer.

The enzyme catalyses 3-oxopropanoate + NAD(+) + CoA + H2O = hydrogencarbonate + acetyl-CoA + NADH + H(+). It carries out the reaction 2-methyl-3-oxopropanoate + NAD(+) + CoA + H2O = propanoyl-CoA + hydrogencarbonate + NADH + H(+). It participates in polyol metabolism; myo-inositol degradation into acetyl-CoA; acetyl-CoA from myo-inositol: step 7/7. Functionally, catalyzes the oxidation of malonate semialdehyde (MSA) and methylmalonate semialdehyde (MMSA) into acetyl-CoA and propanoyl-CoA, respectively. Is involved in a myo-inositol catabolic pathway. Bicarbonate, and not CO2, is the end-product of the enzymatic reaction. In Bacillus cereus (strain ZK / E33L), this protein is Malonate-semialdehyde dehydrogenase 3.